The sequence spans 92 residues: METIPKLMAAVVLLTVCLEGCSSQHWSYGLRPGGKRNTEHLVDSFQEMGKEEDQMAEPQNFECTVHWPRSPLRDLRGALERLIEEEAGQKKM.

The N-terminal stretch at M1–S23 is a signal peptide. At Q24 the chain carries Pyrrolidone carboxylic acid. At G33 the chain carries Glycine amide.

This sequence belongs to the GnRH family. Post-translationally, the precursor is cleaved by ACE, which removes the Gly-Lys-Arg peptide at the C-terminus, leading to mature hormone. The mature form of Gonadoliberin-1 is also cleaved and degraded by ACE. In terms of tissue distribution, central nervous system.

The protein resides in the secreted. Functionally, stimulates the secretion of gonadotropins; it stimulates the secretion of both luteinizing and follicle-stimulating hormones. This chain is Progonadoliberin-1 (Gnrh1), found in Rattus norvegicus (Rat).